The chain runs to 323 residues: HPr kinase/phosphorylase (323 aa).

Residues His-142 and Lys-163 contribute to the active site. 157–164 provides a ligand contact to ATP; the sequence is GESGVGKS. Ser-164 contacts Mg(2+). Catalysis depends on Asp-181, which acts as the Proton acceptor; for phosphorylation activity. Proton donor; for dephosphorylation activity. Residues 205–214 form an important for the catalytic mechanism of both phosphorylation and dephosphorylation region; that stretch reads LEVRGLGMLN. Glu-206 contacts Mg(2+). The active site involves Arg-249. The tract at residues 270-275 is important for the catalytic mechanism of dephosphorylation; it reads PVAAGR.

The protein belongs to the HPrK/P family. In terms of assembly, homohexamer. Requires Mg(2+) as cofactor.

It catalyses the reaction [HPr protein]-L-serine + ATP = [HPr protein]-O-phospho-L-serine + ADP + H(+). The catalysed reaction is [HPr protein]-O-phospho-L-serine + phosphate + H(+) = [HPr protein]-L-serine + diphosphate. Catalyzes the ATP- as well as the pyrophosphate-dependent phosphorylation of a specific serine residue in HPr, a phosphocarrier protein of the phosphoenolpyruvate-dependent sugar phosphotransferase system (PTS). HprK/P also catalyzes the pyrophosphate-producing, inorganic phosphate-dependent dephosphorylation (phosphorolysis) of seryl-phosphorylated HPr (P-Ser-HPr). In Nitrosomonas europaea (strain ATCC 19718 / CIP 103999 / KCTC 2705 / NBRC 14298), this protein is HPr kinase/phosphorylase.